The chain runs to 212 residues: Endonuclease III (212 aa).

The region spanning 108–127 (FKELVKLPGVGRKTANVVLN) is the HhH domain. C187, C194, C197, and C203 together coordinate [4Fe-4S] cluster.

The protein belongs to the Nth/MutY family. [4Fe-4S] cluster serves as cofactor.

The enzyme catalyses 2'-deoxyribonucleotide-(2'-deoxyribose 5'-phosphate)-2'-deoxyribonucleotide-DNA = a 3'-end 2'-deoxyribonucleotide-(2,3-dehydro-2,3-deoxyribose 5'-phosphate)-DNA + a 5'-end 5'-phospho-2'-deoxyribonucleoside-DNA + H(+). Functionally, DNA repair enzyme that has both DNA N-glycosylase activity and AP-lyase activity. The DNA N-glycosylase activity releases various damaged pyrimidines from DNA by cleaving the N-glycosidic bond, leaving an AP (apurinic/apyrimidinic) site. The AP-lyase activity cleaves the phosphodiester bond 3' to the AP site by a beta-elimination, leaving a 3'-terminal unsaturated sugar and a product with a terminal 5'-phosphate. This chain is Endonuclease III, found in Rickettsia prowazekii (strain Madrid E).